A 51-amino-acid polypeptide reads, in one-letter code: MSRNKHVARKLRMAKANRQNRRVPAWVMVKTNYRVRSHPKMRHWRRTKLKV.

It belongs to the eukaryotic ribosomal protein eL39 family.

The polypeptide is Large ribosomal subunit protein eL39 (rpl39e) (Methanothermobacter thermautotrophicus (strain ATCC 29096 / DSM 1053 / JCM 10044 / NBRC 100330 / Delta H) (Methanobacterium thermoautotrophicum)).